The primary structure comprises 91 residues: Class I hydrophobin 3 (91 aa).

Positions 1-17 are cleaved as a signal peptide; it reads MLFRLFTIPSIALGVLG. Intrachain disulfides connect C31-C70, C35-C61, C36-C53, and C71-C87.

The protein belongs to the fungal hydrophobin family. Self-assembles to form functional amyloid fibrils called rodlets. Self-assembly into fibrillar rodlets occurs spontaneously at hydrophobic:hydrophilic interfaces and the rodlets further associate laterally to form amphipathic monolayers. Expressed in conidia.

It localises to the secreted. It is found in the cell wall. Functionally, aerial growth, conidiation, and dispersal of filamentous fungi in the environment rely upon a capability of their secreting small amphipathic proteins called hydrophobins (HPBs) with low sequence identity. Class I can self-assemble into an outermost layer of rodlet bundles on aerial cell surfaces, conferring cellular hydrophobicity that supports fungal growth, development and dispersal; whereas Class II form highly ordered films at water-air interfaces through intermolecular interactions but contribute nothing to the rodlet structure. HYD3 is a class I hydrophobin located on the conidial surface that activates specifically the humoral and cellular immunity of Metarhizium acridum's own host insect, Locusta migratoria manilensis (Meyen) but not that of other non-host insects. Improves the resistance of locusts to both specialist and generalist fungal pathogens (wide host range) when topically applied to the cuticle, but has no effect on the fungal resistance of other insects, including Spodoptera frugiperda and Galleria mellonella. The polypeptide is Class I hydrophobin 3 (Metarhizium acridum (strain CQMa 102)).